The sequence spans 761 residues: 5-methyltetrahydropteroyltriglutamate--homocysteine methyltransferase (761 aa).

5-methyltetrahydropteroyltri-L-glutamate is bound by residues 16–19 (RELK) and lysine 116. Residues 435-437 (IGS) and glutamate 488 contribute to the L-homocysteine site. L-methionine contacts are provided by residues 435 to 437 (IGS) and glutamate 488. 5-methyltetrahydropteroyltri-L-glutamate-binding positions include 519-520 (RC) and tryptophan 565. Residue aspartate 603 participates in L-homocysteine binding. Aspartate 603 provides a ligand contact to L-methionine. 5-methyltetrahydropteroyltri-L-glutamate is bound at residue glutamate 609. Zn(2+) contacts are provided by histidine 645, cysteine 647, and glutamate 669. The active-site Proton donor is histidine 698. Cysteine 730 serves as a coordination point for Zn(2+).

It belongs to the vitamin-B12 independent methionine synthase family. Zn(2+) serves as cofactor.

It catalyses the reaction 5-methyltetrahydropteroyltri-L-glutamate + L-homocysteine = tetrahydropteroyltri-L-glutamate + L-methionine. It participates in amino-acid biosynthesis; L-methionine biosynthesis via de novo pathway; L-methionine from L-homocysteine (MetE route): step 1/1. Its function is as follows. Catalyzes the transfer of a methyl group from 5-methyltetrahydrofolate to homocysteine resulting in methionine formation. The polypeptide is 5-methyltetrahydropteroyltriglutamate--homocysteine methyltransferase (Hahella chejuensis (strain KCTC 2396)).